Reading from the N-terminus, the 104-residue chain is Urease subunit gamma (104 aa).

Belongs to the urease gamma subunit family. As to quaternary structure, heterotrimer of UreA (gamma), UreB (beta) and UreC (alpha) subunits. Three heterotrimers associate to form the active enzyme.

It is found in the cytoplasm. The enzyme catalyses urea + 2 H2O + H(+) = hydrogencarbonate + 2 NH4(+). It functions in the pathway nitrogen metabolism; urea degradation; CO(2) and NH(3) from urea (urease route): step 1/1. This is Urease subunit gamma from Actinomyces naeslundii.